The sequence spans 89 residues: Peroxidase (89 aa).

H52 is a binding site for heme. Residues T53 and D68 each contribute to the Ca(2+) site.

The cofactor is heme b. Ca(2+) serves as cofactor.

Its subcellular location is the secreted. The enzyme catalyses 2 a phenolic donor + H2O2 = 2 a phenolic radical donor + 2 H2O. Removal of H(2)O(2), oxidation of toxic reductants, biosynthesis and degradation of lignin, suberization, auxin catabolism, response to environmental stresses such as wounding, pathogen attack and oxidative stress. These functions might be dependent on each isozyme/isoform in each plant tissue. Active against p-coumaryl alcohol, coniferyl alcohol and coniferyl aldehyde. This is Peroxidase from Ginkgo biloba (Ginkgo).